A 441-amino-acid chain; its full sequence is C4-dicarboxylate transport protein (441 aa).

The Cytoplasmic portion of the chain corresponds to 1–30; sequence MIIEHSAEVRGKTPLYRHLYVQVLAAIAAG. Residues 31-49 form a helical membrane-spanning segment; that stretch reads ILLGHFYPDIGTELKPLGD. At 50–68 the chain is on the periplasmic side; the sequence is AFIRLVKMIIAPVIFLTVA. The chain crosses the membrane as a helical span at residues 69 to 87; that stretch reads TGIAGMTDLAKVGRVAGKA. Residues 88–99 are Cytoplasmic-facing; the sequence is MIYFLAFSTLAL. The helical transmembrane segment at 100 to 118 threads the bilayer; the sequence is VVGLVVANVVQPGAGMHID. Residues 119 to 149 lie on the Periplasmic side of the membrane; it reads PASLDAKAVATYAEKAHEQSITGFLMNIIPT. A helical transmembrane segment spans residues 150–168; sequence TLVGAFAEGDILQVLFISV. The Cytoplasmic portion of the chain corresponds to 169–171; that stretch reads LFG. A helical membrane pass occupies residues 172-190; sequence ISLAIVGKKAEPVVDFLQA. The Periplasmic portion of the chain corresponds to 191–209; it reads LTLPIFRLVAILMKAAPIG. Residues 210 to 228 traverse the membrane as a helical segment; that stretch reads AFGAMAFTIGKYGIASIAN. Topologically, residues 229-241 are cytoplasmic; the sequence is LAMLIGTFYLTSF. The helical transmembrane segment at 242-260 threads the bilayer; that stretch reads LFVFIVLGAVARYNGFSIL. At 261–281 the chain is on the periplasmic side; it reads SLIRYIKEELLLVLGTSSSEA. The chain crosses the membrane as a helical span at residues 282–300; that stretch reads ALPGLMNKMEKAGCKRSVV. The Cytoplasmic segment spans residues 301–320; the sequence is GLVIPTGYSFNLDGTNIYMT. The helical transmembrane segment at 321–339 threads the bilayer; that stretch reads LAALFIAQATDTPLSYGDQ. Topologically, residues 340 to 350 are periplasmic; sequence ILLLLVAMLSS. The chain crosses the membrane as a helical span at residues 351–369; it reads KGAAGITGAGFITLAATLS. The Cytoplasmic portion of the chain corresponds to 370–378; sequence VVPSVPVAG. Residues 379–398 form a helical membrane-spanning segment; it reads MALILGIDRFMSECRALTNF. Over 399-405 the chain is Periplasmic; it reads VGNAVAT. The helical transmembrane segment at 406–424 threads the bilayer; it reads IVVAKWEGELDQAQLSAAL. Residues 425–441 lie on the Cytoplasmic side of the membrane; that stretch reads GGEASVEAIPAVVQPAE.

It belongs to the dicarboxylate/amino acid:cation symporter (DAACS) (TC 2.A.23) family.

It localises to the cell inner membrane. Its function is as follows. Responsible for the transport of dicarboxylates such as succinate, fumarate, and malate from the periplasm across the inner membrane. This transport system plays an important role in the energy supply of rhizobium-legume symbionts. The chain is C4-dicarboxylate transport protein (dctA) from Rhizobium meliloti (strain 1021) (Ensifer meliloti).